The primary structure comprises 133 residues: Ribosome-binding factor A (133 aa).

This sequence belongs to the RbfA family. As to quaternary structure, monomer. Binds 30S ribosomal subunits, but not 50S ribosomal subunits or 70S ribosomes.

The protein resides in the cytoplasm. One of several proteins that assist in the late maturation steps of the functional core of the 30S ribosomal subunit. Associates with free 30S ribosomal subunits (but not with 30S subunits that are part of 70S ribosomes or polysomes). Required for efficient processing of 16S rRNA. May interact with the 5'-terminal helix region of 16S rRNA. The polypeptide is Ribosome-binding factor A (Pseudomonas fluorescens (strain ATCC BAA-477 / NRRL B-23932 / Pf-5)).